Here is a 547-residue protein sequence, read N- to C-terminus: uncharacterized protein (547 aa).

The tract at residues 1 to 37 (MSAASSAIPKRSDPRLLDQKKSAKSTLPKNTPENGVS) is disordered. Residues 10–21 (KRSDPRLLDQKK) show a composition bias toward basic and acidic residues. The span at 24 to 37 (KSTLPKNTPENGVS) shows a compositional bias: polar residues. 2 consecutive C3H1-type zinc fingers follow at residues 41-67 (NLQH…SHSL) and 68-95 (ETER…HALP). The interval 132-176 (SPSLSSKTMKNPADKANNTTATDVRGNTATSPYFPFSRSPGRHSG) is disordered. Residues 147-162 (ANNTTATDVRGNTATS) show a composition bias toward polar residues. A Phosphoserine modification is found at serine 343. Tyrosine 344 is modified (phosphotyrosine). A phosphoserine mark is found at serine 353, serine 355, serine 483, serine 489, serine 495, and serine 499. Threonine 502 carries the post-translational modification Phosphothreonine. A compositionally biased stretch (polar residues) spans 526–536 (VANSSPPWNST). The segment at 526–547 (VANSSPPWNSTVEEETPFQMDD) is disordered. Residues 537–547 (VEEETPFQMDD) are compositionally biased toward acidic residues.

This is an uncharacterized protein from Schizosaccharomyces pombe (strain 972 / ATCC 24843) (Fission yeast).